We begin with the raw amino-acid sequence, 335 residues long: Beta-ketoacyl-[acyl-carrier-protein] synthase III (335 aa).

Active-site residues include Cys119 and His261. Residues 262 to 266 (QANQR) are ACP-binding. Residue Asn291 is part of the active site.

The protein belongs to the thiolase-like superfamily. FabH family. In terms of assembly, homodimer.

The protein localises to the cytoplasm. The catalysed reaction is malonyl-[ACP] + acetyl-CoA + H(+) = 3-oxobutanoyl-[ACP] + CO2 + CoA. It participates in lipid metabolism; fatty acid biosynthesis. Its function is as follows. Catalyzes the condensation reaction of fatty acid synthesis by the addition to an acyl acceptor of two carbons from malonyl-ACP. Catalyzes the first condensation reaction which initiates fatty acid synthesis and may therefore play a role in governing the total rate of fatty acid production. Possesses both acetoacetyl-ACP synthase and acetyl transacylase activities. Its substrate specificity determines the biosynthesis of branched-chain and/or straight-chain of fatty acids. In Prochlorococcus marinus (strain MIT 9515), this protein is Beta-ketoacyl-[acyl-carrier-protein] synthase III.